We begin with the raw amino-acid sequence, 318 residues long: Ankyrin repeat and SOCS box protein 7 (318 aa).

7 ANK repeats span residues 13-42 (QEEL…SPNG), 46-75 (NGWT…DPTV), 80-109 (GGFT…RSDI), 116-145 (DGWT…EVDP), 149-178 (KGTT…NIDI), 180-208 (NGFL…DTDL), and 213-242 (DGQT…DTNT). One can recognise an SOCS box domain in the interval 265-318 (LDFLQEVTRQPRNLQDLCRIKIRQCIGLQNLKLLDELPIAKVMKDYLKHKFDDI).

It belongs to the ankyrin SOCS box (ASB) family. In terms of assembly, interacts with CUL5. Interacts with RNF7. Interacts with PSRC1.

It functions in the pathway protein modification; protein ubiquitination. Functionally, probable substrate-recognition component of a SCF-like ECS (Elongin-Cullin-SOCS-box protein) E3 ubiquitin-protein ligase complex which mediates the ubiquitination and subsequent proteasomal degradation of target proteins. Plays a role in spindle dynamics and genome integrity by targeting the mitotic progression protein PSRC1 for proteasomal degradation in a cell cycle-dependent manner. Also participates in meiosis by mediating the proper attachment between kinetochores and microtubules. This chain is Ankyrin repeat and SOCS box protein 7 (ASB7), found in Macaca fascicularis (Crab-eating macaque).